The primary structure comprises 454 residues: tRNA modification GTPase MnmE (454 aa).

Residues Arg23, Glu80, and Lys120 each contribute to the (6S)-5-formyl-5,6,7,8-tetrahydrofolate site. One can recognise a TrmE-type G domain in the interval Gly216 to Gly377. Asn226 is a binding site for K(+). GTP-binding positions include Asn226 to Ser231, Thr245 to Thr251, Asp270 to Gly273, Asn335 to Asp338, and Ser358 to Arg360. Ser230 contacts Mg(2+). Positions 245, 247, and 250 each coordinate K(+). Mg(2+) is bound at residue Thr251. Position 454 (Lys454) interacts with (6S)-5-formyl-5,6,7,8-tetrahydrofolate.

This sequence belongs to the TRAFAC class TrmE-Era-EngA-EngB-Septin-like GTPase superfamily. TrmE GTPase family. Homodimer. Heterotetramer of two MnmE and two MnmG subunits. Requires K(+) as cofactor.

It is found in the cytoplasm. Its function is as follows. Exhibits a very high intrinsic GTPase hydrolysis rate. Involved in the addition of a carboxymethylaminomethyl (cmnm) group at the wobble position (U34) of certain tRNAs, forming tRNA-cmnm(5)s(2)U34. This Yersinia pestis protein is tRNA modification GTPase MnmE.